A 126-amino-acid chain; its full sequence is DNA-directed RNA polymerase subunit omega (126 aa).

It belongs to the RNA polymerase subunit omega family. In terms of assembly, the RNAP catalytic core consists of 2 alpha, 1 beta, 1 beta' and 1 omega subunit. When a sigma factor is associated with the core the holoenzyme is formed, which can initiate transcription.

The enzyme catalyses RNA(n) + a ribonucleoside 5'-triphosphate = RNA(n+1) + diphosphate. Its function is as follows. Promotes RNA polymerase assembly. Latches the N- and C-terminal regions of the beta' subunit thereby facilitating its interaction with the beta and alpha subunits. The polypeptide is DNA-directed RNA polymerase subunit omega (Rickettsia bellii (strain OSU 85-389)).